The primary structure comprises 611 residues: Serine/arginine repetitive matrix protein 4 (611 aa).

Disordered stretches follow at residues 38–248 and 263–611; these read ARKP…PLQM and SAAD…STRR. Composition is skewed to basic residues over residues 107-123 and 131-189; these read RGKKKKKKSTRKKRRRS and VKKK…HRCP. Over residues 190-202 the composition is skewed to low complexity; it reads SRSQSSESRPSSC. Basic and acidic residues predominate over residues 203-216; that stretch reads ESRHRGRSPEEGQK. A compositionally biased stretch (basic residues) spans 217–226; it reads SRRRHSRRCS. The segment covering 270–290 has biased composition (polar residues); that stretch reads KTASPLTTSRGRSQEYDSGND. Positions 291-301 are enriched in low complexity; it reads TSSPPSTQTSS. Positions 322 to 341 are enriched in polar residues; it reads LNSGNTSDSGNSFTTSSPQN. 2 stretches are compositionally biased toward low complexity: residues 390 to 422 and 430 to 461; these read SRSSSYASTRSSSHSSRSPNPRASPRYTQSRST and SRSPSYSSKSGKRSPPSRSSRSRRSPSYSRYS. A compositionally biased stretch (basic and acidic residues) spans 462 to 482; that stretch reads PSRERDPKYSEKDSQQRERER. Positions 483-498 are enriched in basic residues; the sequence is ARRRRRSYSPMRKRRR. Over residues 499–508 the composition is skewed to basic and acidic residues; the sequence is DSPSHLEARR. Residues 522 to 549 are compositionally biased toward low complexity; the sequence is PSPSSSGSLSSTSSWYSSSSSRSASRSY. Basic residues predominate over residues 550–564; sequence SRSRSRSRSRRRSRT. Positions 565 to 580 are enriched in low complexity; that stretch reads RTSSSSSSRSPSPGSR. Positions 581–595 are enriched in basic residues; it reads SRSRSRSRSRSRSRS. Residues 596 to 611 are compositionally biased toward low complexity; that stretch reads QSRSYSSADSYSSTRR.

Belongs to the nSR100 family. Post-translationally, phosphorylated. As to expression, specifically expressed in neuronal cells (at protein level). Expressed in the cerebellum.

It localises to the nucleus. Functionally, splicing factor specifically required for neural cell differentiation. Acts in conjunction with nPTB/PTBP2 by binding directly to its regulated target transcripts and promotes neural-specific exon inclusion in many genes that function in neural cell differentiation. Required to promote the inclusion of neural-specific exon 10 in nPTB/PTBP2, leading to increased expression of neural-specific nPTB/PTBP2. Also promotes the inclusion of exon 16 in DAAM1 in neuron extracts. Promotes alternative splicing of REST transcripts to produce REST isoform 3 (REST4) with greatly reduced repressive activity, thereby activating expression of REST targets in neural cells. Plays an important role during embryonic development as well as in the proper functioning of the adult nervous system. Regulates alternative splicing events in genes with important neuronal functions. The sequence is that of Serine/arginine repetitive matrix protein 4 (SRRM4) from Homo sapiens (Human).